The following is a 166-amino-acid chain: MSNAIDTKKVVVDEITSKFKDSMSTVIVDYRGLSVSEVTELRKQLRDAGVEFKVYKNTLTRRAVEQVELTGLNDFLTGPNAIAFSNEDVIAPAKIINEFAKSHEALEIKAGVIEGNVATVEEVKALAELPSREGLLSMLLSVLQAPVRNLALATKAVADQKEEQGA.

This sequence belongs to the universal ribosomal protein uL10 family. As to quaternary structure, part of the ribosomal stalk of the 50S ribosomal subunit. The N-terminus interacts with L11 and the large rRNA to form the base of the stalk. The C-terminus forms an elongated spine to which L12 dimers bind in a sequential fashion forming a multimeric L10(L12)X complex.

Functionally, forms part of the ribosomal stalk, playing a central role in the interaction of the ribosome with GTP-bound translation factors. This chain is Large ribosomal subunit protein uL10, found in Bacillus pumilus (strain SAFR-032).